Reading from the N-terminus, the 463-residue chain is Probable mannan endo-1,4-beta-mannosidase F (463 aa).

The signal sequence occupies residues 1–18 (MRSLSSIALLSVVGAASA). In terms of domain architecture, CBM1 spans 19 to 54 (QAGPWAQCGGKSFSGSSECASGWKCQELNEWFSQCV). The tract at residues 57-78 (AESTTPTVSSTPTPTDAPSVSI) is disordered. Residues 59–77 (STTPTVSSTPTPTDAPSVS) are compositionally biased toward low complexity. The interval 75 to 118 (SVSITASATTGINKSISVSSASKSTPLPSSSSASPSPRPTGSGS) is ser-rich linker. The N-linked (GlcNAc...) asparagine glycan is linked to N87. The segment covering 93-118 (SSASKSTPLPSSSSASPSPRPTGSGS) has biased composition (low complexity). Residues 93-121 (SSASKSTPLPSSSSASPSPRPTGSGSFAK) form a disordered region. The tract at residues 119 to 463 (FAKADGLQFS…MDHMENVNKN (345 aa)) is catalytic. Substrate is bound by residues W171 and N285. E286 serves as the catalytic Proton donor. Substrate is bound at residue Y361. E395 (nucleophile) is an active-site residue. A substrate-binding site is contributed by W424.

This sequence belongs to the glycosyl hydrolase 5 (cellulase A) family.

It localises to the secreted. The catalysed reaction is Random hydrolysis of (1-&gt;4)-beta-D-mannosidic linkages in mannans, galactomannans and glucomannans.. Endo-1,4-mannanase, a crucial enzyme for depolymerization of seed galactomannans and wood galactoglucomannans. The protein is Probable mannan endo-1,4-beta-mannosidase F (manF) of Aspergillus flavus (strain ATCC 200026 / FGSC A1120 / IAM 13836 / NRRL 3357 / JCM 12722 / SRRC 167).